A 474-amino-acid polypeptide reads, in one-letter code: TOM1-like protein 1 (474 aa).

A VHS domain is found at Ala-22 to Pro-154. The interval Phe-153 to Ala-180 is disordered. Polar residues predominate over residues Glu-165–Pro-178. Ser-170 is modified (phosphoserine). One can recognise a GAT domain in the interval Glu-199–Arg-287. The segment at Arg-291–Leu-317 is disordered. The segment covering Leu-293–Ala-302 has biased composition (basic and acidic residues). Phosphoserine is present on residues Ser-313 and Ser-320. Residues Tyr-392–Phe-395 form an interaction with GRB2 region. Positions Leu-420–Pro-424 match the SH3-binding motif. Residues Tyr-441–Met-444 are interaction with PIK3R1. Residue Tyr-457 is modified to Phosphotyrosine. Residues Tyr-457–Ile-460 carry the SH2-binding motif.

It belongs to the TOM1 family. In terms of assembly, interacts with LYN. Interacts with the SH2 and SH3 domains of FYN when phosphorylated. Also interacts with GRB2 and PIK3R1 when phosphorylated. In terms of processing, phosphorylated on tyrosines by LYN. Phosphorylated on tyrosines by FYN. As to expression, strongly expressed in brain and kidney, expressed at intermediate levels skin and heart, and weakly expressed in thymus. Not expressed in liver and spleen.

The protein localises to the golgi apparatus. It is found in the golgi stack. Its subcellular location is the endosome membrane. It localises to the cytoplasm. The protein resides in the membrane. In terms of biological role, probable adapter protein involved in signaling pathways. Interacts with the SH2 and SH3 domains of various signaling proteins when it is phosphorylated. May promote FYN activation, possibly by disrupting intramolecular SH3-dependent interactions. The sequence is that of TOM1-like protein 1 (Tom1l1) from Mus musculus (Mouse).